The primary structure comprises 317 residues: R-spondin-3 (317 aa).

Residues 1–20 form the signal peptide; sequence MQLQLISIVLILHFMEYTNC. FU repeat units lie at residues 34 to 86, 92 to 135, and 139 to 183; these read SGVS…GFYG, RNDC…GLVP, and KKEC…EFEP. 11 disulfide bridges follow: cysteine 41–cysteine 48, cysteine 45–cysteine 54, cysteine 57–cysteine 76, cysteine 80–cysteine 95, cysteine 98–cysteine 105, cysteine 102–cysteine 111, cysteine 114–cysteine 125, cysteine 129–cysteine 189, cysteine 195–cysteine 237, cysteine 206–cysteine 213, and cysteine 246–cysteine 253. Asparagine 184 carries an N-linked (GlcNAc...) asparagine glycan. Residues 194–254 enclose the TSP type-1 domain; sequence HCEVSEWSEW…ECFVKKKRCK (61 aa). The segment covering 251-268 has biased composition (basic residues); that stretch reads KRCKPPKGQRRGEKKKRF. The interval 251 to 317 is disordered; it reads KRCKPPKGQR…RDQSRDAGTV (67 aa). Positions 274-303 are enriched in basic and acidic residues; sequence VTAEARRERKREREKETIDREESENRNKTE. The N-linked (GlcNAc...) asparagine glycan is linked to asparagine 300.

This sequence belongs to the R-spondin family. Binds heparin.

It is found in the secreted. Activator of the canonical Wnt signaling pathway by acting as a ligand for lgr4-6 receptors, which acts as a key regulator of angiogenesis. Upon binding to lgr4-6 (lgr4, lgr5 or lgr6), lgr4-6 associate with phosphorylated lrp6 and frizzled receptors that are activated by extracellular Wnt receptors, triggering the canonical Wnt signaling pathway to increase expression of target genes. Acts both in the canonical. Wnt/beta-catenin-dependent pathway and in non-canonical Wnt signaling pathway. Acts as a key regulator of angiogenesis by controlling vascular stability and pruning: acts by activating the non-canonical Wnt signaling pathway in endothelial cells. Can also amplify Wnt signaling pathway independently of LGR4-6 receptors, possibly by acting as a direct antagonistic ligand to RNF43 and ZNRF3. The protein is R-spondin-3 (rspo3) of Danio rerio (Zebrafish).